Consider the following 350-residue polypeptide: Cephaeline 6'-O-methyltransferase IpeOMT1 (350 aa).

S-adenosyl-L-methionine-binding residues include glycine 193, aspartate 216, aspartate 236, methionine 237, and lysine 250. Histidine 254 acts as the Proton acceptor in catalysis.

The protein belongs to the class I-like SAM-binding methyltransferase superfamily. Cation-independent O-methyltransferase family. In terms of tissue distribution, expressed in roots.

Its subcellular location is the cytoplasm. It is found in the cytosol. The catalysed reaction is cephaeline + S-adenosyl-L-methionine = emetine + S-adenosyl-L-homocysteine + H(+). It carries out the reaction deacetylisoipecoside + S-adenosyl-L-methionine = 6-O-methyldeacetylisoipecoside + S-adenosyl-L-homocysteine + H(+). It catalyses the reaction 7-O-methyldeacetylisoipecoside + S-adenosyl-L-methionine = 6,7-O,O-dimethyldeacetylisoipecoside + S-adenosyl-L-homocysteine + H(+). The enzyme catalyses norcoclaurine + S-adenosyl-L-methionine = coclaurine + S-adenosyl-L-homocysteine + H(+). The catalysed reaction is (S)-norprotosinomenine + S-adenosyl-L-methionine = (S)-6-O-methylnorprotosinomenine + S-adenosyl-L-homocysteine + H(+). It carries out the reaction (R)-norprotosinomenine + S-adenosyl-L-methionine = (R)-6-O-methylnorprotosinomenine + S-adenosyl-L-homocysteine + H(+). It participates in alkaloid biosynthesis. In terms of biological role, O-methyltransferase involved in the biosynthesis of ipecac and benzylisoquinoline monoterpenoid-isoquinoline alkaloids natural products, starting by the condensation of dopamine and secologanin, and including emetine and cephaeline, drugs used both as anti-protozoal (e.g. treatment of ameobiasis) and as emetic agents. Mediates cephaeline 6'-O-methylation to produce emetine. Catalyzes the 6-O-methylation of N-deacetylisoipecoside, 7-O-methyl-N-deacetylisoipecoside, isococlaurine, norcoclaurine, (S)-norprotosinomenine and (R)-norprotosinomenine, and, with a lower efficiency, of 4'-O-methyllaudanosoline, isoorientaline and protosinomenine. Supports also the 4'-O-methylation of nororientaline. The chain is Cephaeline 6'-O-methyltransferase IpeOMT1 from Carapichea ipecacuanha (Ipecac).